The sequence spans 369 residues: 4-hydroxy-3-methylbut-2-en-1-yl diphosphate synthase (flavodoxin) (369 aa).

Residues Cys270, Cys273, Cys305, and Glu312 each coordinate [4Fe-4S] cluster.

Belongs to the IspG family. [4Fe-4S] cluster serves as cofactor.

The catalysed reaction is (2E)-4-hydroxy-3-methylbut-2-enyl diphosphate + oxidized [flavodoxin] + H2O + 2 H(+) = 2-C-methyl-D-erythritol 2,4-cyclic diphosphate + reduced [flavodoxin]. Its pathway is isoprenoid biosynthesis; isopentenyl diphosphate biosynthesis via DXP pathway; isopentenyl diphosphate from 1-deoxy-D-xylulose 5-phosphate: step 5/6. Converts 2C-methyl-D-erythritol 2,4-cyclodiphosphate (ME-2,4cPP) into 1-hydroxy-2-methyl-2-(E)-butenyl 4-diphosphate. This Pseudomonas putida (strain ATCC 47054 / DSM 6125 / CFBP 8728 / NCIMB 11950 / KT2440) protein is 4-hydroxy-3-methylbut-2-en-1-yl diphosphate synthase (flavodoxin).